The chain runs to 36 residues: Conotoxin Bt11.4 (36 aa).

4 disulfide bridges follow: cysteine 2–cysteine 16, cysteine 9–cysteine 21, cysteine 15–cysteine 26, and cysteine 20–cysteine 33.

This sequence belongs to the conotoxin I1 superfamily. Expressed by the venom duct.

The protein resides in the secreted. The protein is Conotoxin Bt11.4 of Conus betulinus (Beech cone).